The sequence spans 335 residues: DNA-directed RNA polymerase subunit alpha (335 aa).

Residues 1-233 are alpha N-terminal domain (alpha-NTD); that stretch reads MQRNWRELIK…DQLTIFINFE (233 aa). The alpha C-terminal domain (alpha-CTD) stretch occupies residues 249-335; that stretch reads FNDHLFRSVD…DIENRRKEQE (87 aa).

The protein belongs to the RNA polymerase alpha chain family. As to quaternary structure, homodimer. The RNAP catalytic core consists of 2 alpha, 1 beta, 1 beta' and 1 omega subunit. When a sigma factor is associated with the core the holoenzyme is formed, which can initiate transcription.

It carries out the reaction RNA(n) + a ribonucleoside 5'-triphosphate = RNA(n+1) + diphosphate. Its function is as follows. DNA-dependent RNA polymerase catalyzes the transcription of DNA into RNA using the four ribonucleoside triphosphates as substrates. This is DNA-directed RNA polymerase subunit alpha from Syntrophobacter fumaroxidans (strain DSM 10017 / MPOB).